A 268-amino-acid polypeptide reads, in one-letter code: UPF0739 protein C1orf74 homolog (268 aa).

This sequence belongs to the UPF0739 family.

In Salmo salar (Atlantic salmon), this protein is UPF0739 protein C1orf74 homolog.